A 493-amino-acid polypeptide reads, in one-letter code: Transcript termination protein A18 (493 aa).

The region spanning 100 to 256 is the Helicase ATP-binding domain; that stretch reads MIESKRPLYI…NSIINIAKLS (157 aa). 113 to 120 is an ATP binding site; sequence LACGFGKT. The DESH box signature appears at 206–209; that stretch reads DESH.

This sequence belongs to the helicase family. Poxviruses subfamily. As to quaternary structure, interacts with G2. Might be part of a transcription complex composed at least of G2, A18, and H5.

Its subcellular location is the virion. Functionally, DNA helicase which seems to act as a postreplicative transcription termination factor. Involved in ATP-dependent release of nascent RNA. Forms a stable complex with single-stranded DNA, and to a lesser extent RNA. The chain is Transcript termination protein A18 from Homo sapiens (Human).